Consider the following 150-residue polypeptide: 3-dehydroquinate dehydratase (150 aa).

The active-site Proton acceptor is Tyr26. Positions 77, 83, and 90 each coordinate substrate. The active-site Proton donor is His103. Substrate contacts are provided by residues Leu104 to Ser105 and Arg114.

The protein belongs to the type-II 3-dehydroquinase family. In terms of assembly, homododecamer.

It carries out the reaction 3-dehydroquinate = 3-dehydroshikimate + H2O. The protein operates within metabolic intermediate biosynthesis; chorismate biosynthesis; chorismate from D-erythrose 4-phosphate and phosphoenolpyruvate: step 3/7. Functionally, catalyzes a trans-dehydration via an enolate intermediate. The polypeptide is 3-dehydroquinate dehydratase (Photobacterium profundum (strain SS9)).